We begin with the raw amino-acid sequence, 162 residues long: Malaria protein EXP-1 (162 aa).

The signal sequence occupies residues M1 to A22. The helical transmembrane segment at V80–Y101 threads the bilayer. The tract at residues P109 to H162 is disordered. A compositionally biased stretch (low complexity) spans S114–N130. The tract at residues N120–P137 is epitope (deduced). Residues P137–H162 show a composition bias toward polar residues.

It is found in the parasitophorous vacuole membrane. The chain is Malaria protein EXP-1 (EXP-1) from Plasmodium falciparum.